The chain runs to 423 residues: Glucose-1-phosphate adenylyltransferase (423 aa).

Alpha-D-glucose 1-phosphate-binding positions include Tyr-98, Gly-163, 178 to 179 (EK), and Ser-189.

It belongs to the bacterial/plant glucose-1-phosphate adenylyltransferase family. In terms of assembly, homotetramer.

It catalyses the reaction alpha-D-glucose 1-phosphate + ATP + H(+) = ADP-alpha-D-glucose + diphosphate. Its pathway is glycan biosynthesis; glycogen biosynthesis. Functionally, involved in the biosynthesis of ADP-glucose, a building block required for the elongation reactions to produce glycogen. Catalyzes the reaction between ATP and alpha-D-glucose 1-phosphate (G1P) to produce pyrophosphate and ADP-Glc. The polypeptide is Glucose-1-phosphate adenylyltransferase (Thermotoga neapolitana (strain ATCC 49049 / DSM 4359 / NBRC 107923 / NS-E)).